The following is a 278-amino-acid chain: Putative glycosyltransferase EpsE (278 aa).

Belongs to the glycosyltransferase 2 family.

May be involved in the production of the exopolysaccharide (EPS) component of the extracellular matrix during biofilm formation. EPS is responsible for the adhesion of chains of cells into bundles. Required for biofilm maintenance. In Bacillus subtilis (strain 168), this protein is Putative glycosyltransferase EpsE (epsE).